Here is a 95-residue protein sequence, read N- to C-terminus: Antitoxin TacA1 (95 aa).

Residues 59–95 (FNFNDEQYEEFINLLDAPVADDPVIEKLLARKPQWDV) are neutralization domain.

It belongs to the TacA antitoxin family. Homodimer. Forms a complex with cognate toxin TacT1. Forms a 4:2 antitoxin:toxin complex with cognate toxin TacT1.

Functionally, antitoxin component of a type II toxin-antitoxin (TA) system. Counteracts the toxic effect of cognate toxin TacT1 (T8), but not TacT2 or TacT3. Plays a role in persister cell formation. Its function is as follows. The TacA1-TacT1 complex binds (and probably represses) its own promoter DNA but not that of tacA3-tacT3, it does not repress the tacA3-tacT3 promoter. This chain is Antitoxin TacA1, found in Salmonella typhimurium (strain 14028s / SGSC 2262).